The primary structure comprises 269 residues: Hydroxyethylthiazole kinase (269 aa).

Residue M41 participates in substrate binding. Residues R117 and S163 each contribute to the ATP site. Position 190 (G190) interacts with substrate.

It belongs to the Thz kinase family. Requires Mg(2+) as cofactor.

It catalyses the reaction 5-(2-hydroxyethyl)-4-methylthiazole + ATP = 4-methyl-5-(2-phosphooxyethyl)-thiazole + ADP + H(+). It functions in the pathway cofactor biosynthesis; thiamine diphosphate biosynthesis; 4-methyl-5-(2-phosphoethyl)-thiazole from 5-(2-hydroxyethyl)-4-methylthiazole: step 1/1. Functionally, catalyzes the phosphorylation of the hydroxyl group of 4-methyl-5-beta-hydroxyethylthiazole (THZ). The polypeptide is Hydroxyethylthiazole kinase (Latilactobacillus sakei subsp. sakei (strain 23K) (Lactobacillus sakei subsp. sakei)).